The primary structure comprises 294 residues: tRNA dimethylallyltransferase (294 aa).

Position 7–14 (7–14) interacts with ATP; that stretch reads GPTGSGKS. 9-14 contributes to the substrate binding site; it reads TGSGKS.

The protein belongs to the IPP transferase family. As to quaternary structure, monomer. The cofactor is Mg(2+).

The enzyme catalyses adenosine(37) in tRNA + dimethylallyl diphosphate = N(6)-dimethylallyladenosine(37) in tRNA + diphosphate. Functionally, catalyzes the transfer of a dimethylallyl group onto the adenine at position 37 in tRNAs that read codons beginning with uridine, leading to the formation of N6-(dimethylallyl)adenosine (i(6)A). The sequence is that of tRNA dimethylallyltransferase from Akkermansia muciniphila (strain ATCC BAA-835 / DSM 22959 / JCM 33894 / BCRC 81048 / CCUG 64013 / CIP 107961 / Muc).